The following is a 277-amino-acid chain: Probable endonuclease 4 (277 aa).

Zn(2+) contacts are provided by H67, H107, E141, D173, H176, H207, D220, H222, and E252.

This sequence belongs to the AP endonuclease 2 family. It depends on Zn(2+) as a cofactor.

It carries out the reaction Endonucleolytic cleavage to 5'-phosphooligonucleotide end-products.. Endonuclease IV plays a role in DNA repair. It cleaves phosphodiester bonds at apurinic or apyrimidinic (AP) sites, generating a 3'-hydroxyl group and a 5'-terminal sugar phosphate. The sequence is that of Probable endonuclease 4 from Finegoldia magna (strain ATCC 29328 / DSM 20472 / WAL 2508) (Peptostreptococcus magnus).